Reading from the N-terminus, the 343-residue chain is Biotin synthase (343 aa).

The region spanning 36 to 254 is the Radical SAM core domain; sequence NTIQISTLLS…IAVARIMMPK (219 aa). Residues Cys-51, Cys-55, and Cys-58 each contribute to the [4Fe-4S] cluster site. [2Fe-2S] cluster-binding residues include Cys-95, Cys-126, Cys-186, and Arg-258.

It belongs to the radical SAM superfamily. Biotin synthase family. In terms of assembly, homodimer. Requires [4Fe-4S] cluster as cofactor. It depends on [2Fe-2S] cluster as a cofactor.

It catalyses the reaction (4R,5S)-dethiobiotin + (sulfur carrier)-SH + 2 reduced [2Fe-2S]-[ferredoxin] + 2 S-adenosyl-L-methionine = (sulfur carrier)-H + biotin + 2 5'-deoxyadenosine + 2 L-methionine + 2 oxidized [2Fe-2S]-[ferredoxin]. It functions in the pathway cofactor biosynthesis; biotin biosynthesis; biotin from 7,8-diaminononanoate: step 2/2. In terms of biological role, catalyzes the conversion of dethiobiotin (DTB) to biotin by the insertion of a sulfur atom into dethiobiotin via a radical-based mechanism. The sequence is that of Biotin synthase from Buchnera aphidicola subsp. Acyrthosiphon pisum (strain 5A).